The sequence spans 161 residues: Phosphopantetheine adenylyltransferase (161 aa).

Serine 8 is a binding site for substrate. Residues 8-9 (SF) and histidine 16 each bind ATP. Residues lysine 40, threonine 72, and arginine 86 each coordinate substrate. ATP contacts are provided by residues 87–89 (GLR), glutamate 97, and 122–128 (HSFLSSS).

It belongs to the bacterial CoaD family. In terms of assembly, homohexamer. It depends on Mg(2+) as a cofactor.

Its subcellular location is the cytoplasm. It carries out the reaction (R)-4'-phosphopantetheine + ATP + H(+) = 3'-dephospho-CoA + diphosphate. The protein operates within cofactor biosynthesis; coenzyme A biosynthesis; CoA from (R)-pantothenate: step 4/5. Functionally, reversibly transfers an adenylyl group from ATP to 4'-phosphopantetheine, yielding dephospho-CoA (dPCoA) and pyrophosphate. The polypeptide is Phosphopantetheine adenylyltransferase (Gloeobacter violaceus (strain ATCC 29082 / PCC 7421)).